The primary structure comprises 461 residues: MDKKRHVHFIGIGGSGMNGIAAIMLGLGYRVTGSDLKPSAATRRLEALGATCYTRHAEENLGDADLVVASTAIPPDNIELVEARKRGLPVMHRADLLAWLMRRQKGIAVAGAHGKTTTTSMTALVLEKNGMDPTIVIGGELSEIGGNAKLGRGEYLVAEADESDGSFLKLDPVIEIITNIEDDHLDYYRSVENILAAFRRFMAKVPESGLAVACLDDPRLRELLAGYDRPCLTYALDNPEADYTMRNIRLMRQVTAGDVYYRGGFLGCLELSVPGRHNLSNAMAAVAVGRFVGLAFEGIAAALKDFRGAGRRFQLTGEVNGIKVIDDYAHHPSEIKATLKAAGQVKTGRVVGVFQPHRYTRTLFLGERFGEAFEDADVVIISDIYSAGEKPIEGVSAKTIVSAIEKHNGRKVIYLPTRQEIVDYLVQMARPGDMILTMGAGDIWSAGIELVKRLKENQKIG.

111–117 (GAHGKTT) lines the ATP pocket.

The protein belongs to the MurCDEF family.

Its subcellular location is the cytoplasm. It catalyses the reaction UDP-N-acetyl-alpha-D-muramate + L-alanine + ATP = UDP-N-acetyl-alpha-D-muramoyl-L-alanine + ADP + phosphate + H(+). The protein operates within cell wall biogenesis; peptidoglycan biosynthesis. Cell wall formation. This chain is UDP-N-acetylmuramate--L-alanine ligase, found in Pelotomaculum thermopropionicum (strain DSM 13744 / JCM 10971 / SI).